The primary structure comprises 133 residues: Small ribosomal subunit protein uS8 (133 aa).

Belongs to the universal ribosomal protein uS8 family. As to quaternary structure, part of the 30S ribosomal subunit. Contacts proteins S5 and S12.

Functionally, one of the primary rRNA binding proteins, it binds directly to 16S rRNA central domain where it helps coordinate assembly of the platform of the 30S subunit. The chain is Small ribosomal subunit protein uS8 from Chloroflexus aurantiacus (strain ATCC 29364 / DSM 637 / Y-400-fl).